Here is a 373-residue protein sequence, read N- to C-terminus: Indole glucosinolate O-methyltransferase 1 (373 aa).

The S-adenosyl-L-homocysteine site is built by Gly217, Asp240, Asp260, Met261, and Lys274. The active-site Proton acceptor is the His278.

It belongs to the class I-like SAM-binding methyltransferase superfamily. Cation-independent O-methyltransferase family. Interacts with B'GAMMA.

It participates in secondary metabolite biosynthesis. In terms of biological role, involved in indole glucosinolate biosynthesis. Catalyzes methoxylation reactions of the glucosinolate indole ring. Converts the hydroxy intermediates 4-hydroxy-indol-3-yl-methylglucosinolate (4OH-I3M) and 1-hydroxy-indol-3-yl-methylglucosinolate (1OH-I3M) to 4-methoxy-indol-3-yl-methylglucosinolate (4MO-I3M) and 1-methoxy-indol-3-yl-methylglucosinolate (1MO-I3M), respectively. The polypeptide is Indole glucosinolate O-methyltransferase 1 (Arabidopsis thaliana (Mouse-ear cress)).